A 496-amino-acid chain; its full sequence is MMTMPLSKLFAHASRDPLIRELTLDSRSVRPGDLFLAVPGAKVDGREHIADALARGAAAVAYEEQGANVLPLTDVPLIPVKGLIAQLSDIAGRFYGEPSRQLNLVGVTGTNGKTSVTQLVAQALDLLGQRCGLIGTLGTGFYGELQSGRLTTPDPIAVQSTLNDLKKGGARAVAMEVSSHALEQGRVAALEFDIAVMTNLSRDHLDYHGSMEAYEAAKAKLFAWPSLRCQVVNLDDDFGRRLAADFARRPSVDHIETRLLSYSLESPEASLFCREAVFSDDGVRATLVTAQGERILRSQLLGRFNLSNMLAAVATLLALDYALDEILKVTPQLQGPVGRMQRLGGGDKPLVVVDYAHTPDALEKVLEALRPHAHGKLLCLFGCGGDRDRGKRPLMAEVAERLADRVLVTDDNPRTEDPSRIFDDIRPGFTRPDDVEFVAGRGEAIAHLIATAAANDVIVLAGKGHEDYQEINGERHDFSDLTEAEKALAAWEAPHA.

UDP-N-acetyl-alpha-D-muramoyl-L-alanyl-D-glutamate contacts are provided by L24 and S26. 109-115 (GTNGKTS) contacts ATP. Residues 151–152 (TT), S178, Q184, and R186 each bind UDP-N-acetyl-alpha-D-muramoyl-L-alanyl-D-glutamate. N6-carboxylysine is present on K218. Meso-2,6-diaminopimelate contacts are provided by residues R387, 411–414 (DNPR), G462, and E466. Positions 411–414 (DNPR) match the Meso-diaminopimelate recognition motif motif.

This sequence belongs to the MurCDEF family. MurE subfamily. Mg(2+) serves as cofactor. Post-translationally, carboxylation is probably crucial for Mg(2+) binding and, consequently, for the gamma-phosphate positioning of ATP.

Its subcellular location is the cytoplasm. It carries out the reaction UDP-N-acetyl-alpha-D-muramoyl-L-alanyl-D-glutamate + meso-2,6-diaminopimelate + ATP = UDP-N-acetyl-alpha-D-muramoyl-L-alanyl-gamma-D-glutamyl-meso-2,6-diaminopimelate + ADP + phosphate + H(+). The protein operates within cell wall biogenesis; peptidoglycan biosynthesis. Its function is as follows. Catalyzes the addition of meso-diaminopimelic acid to the nucleotide precursor UDP-N-acetylmuramoyl-L-alanyl-D-glutamate (UMAG) in the biosynthesis of bacterial cell-wall peptidoglycan. The sequence is that of UDP-N-acetylmuramoyl-L-alanyl-D-glutamate--2,6-diaminopimelate ligase from Pseudomonas putida (strain ATCC 47054 / DSM 6125 / CFBP 8728 / NCIMB 11950 / KT2440).